We begin with the raw amino-acid sequence, 208 residues long: Inducible T-cell costimulator (208 aa).

The signal sequence occupies residues 1 to 19; the sequence is MKSDLWYFLLFCFQVEALT. Over 20–140 the chain is Extracellular; that stretch reads GEINDSTKSE…YESQTCCQLK (121 aa). Asn23 is a glycosylation site (N-linked (GlcNAc...) asparagine). The Ig-like V-type domain occupies 30–132; sequence MFTFHDGGVQ…ISREYLNVYE (103 aa). 2 disulfides stabilise this stretch: Cys42-Cys108 and Cys63-Cys82. N-linked (GlcNAc...) asparagine glycosylation is present at Asn122. The helical transmembrane segment at 141–161 threads the bilayer; it reads FWLPIGCAAFVVVYIFGCIFL. At 162–208 the chain is on the cytoplasmic side; that stretch reads CWLTKKKYRSSVHDPNSEYMFMAAVNTAKKPGLTGVTHNLELCGTQA.

In terms of assembly, homodimer; disulfide-linked. Interacts with ICOSLG. Interacts with PIK3R1. Interacts with TBK1; this interaction is critical for the maturation of T follicular regulatory cells. In terms of processing, N-glycosylated.

Its subcellular location is the cell membrane. Functionally, stimulatory receptor expressed in activated or antigen-experienced T-cells that plays an important role in the immune response. Upon binding to its ligand ICOSL expressed on antigen presenting cells (APCs), delivers costimulatory signals that enhances all basic T-cell responses to a foreign antigen, namely proliferation, secretion of lymphokines including IL10, up-regulation of molecules that mediate cell-cell interaction, and effective help for antibody secretion by B-cells. Also acts as a costimulatory receptor critical for the differentiation of T follicular regulatory cells upon immune challenges such as viral infection. Mechanistically, potentiates TCR-induced calcium flux by augmenting PLCG1 activation and actin remodeling. In addition, activates PI3K signaling pathways independently of calcium flux. Essential both for efficient interaction between T and B-cells and for normal antibody responses to T-cell dependent antigens. Prevents the apoptosis of pre-activated T-cells. Plays a critical role in CD40-mediated class switching of immunoglobin isotypes. In Canis lupus familiaris (Dog), this protein is Inducible T-cell costimulator (ICOS).